The chain runs to 98 residues: NADH-ubiquinone oxidoreductase chain 4L (98 aa).

The next 3 helical transmembrane spans lie at 1-21 (MLAI…GVLV), 25-45 (HLMS…ILMT), and 57-79 (SMAP…ALLV).

It belongs to the complex I subunit 4L family. In terms of assembly, core subunit of respiratory chain NADH dehydrogenase (Complex I) which is composed of 45 different subunits.

The protein resides in the mitochondrion inner membrane. It catalyses the reaction a ubiquinone + NADH + 5 H(+)(in) = a ubiquinol + NAD(+) + 4 H(+)(out). Its function is as follows. Core subunit of the mitochondrial membrane respiratory chain NADH dehydrogenase (Complex I) which catalyzes electron transfer from NADH through the respiratory chain, using ubiquinone as an electron acceptor. Part of the enzyme membrane arm which is embedded in the lipid bilayer and involved in proton translocation. The protein is NADH-ubiquinone oxidoreductase chain 4L (MT-ND4L) of Dasyurus hallucatus (Northern quoll).